An 85-amino-acid chain; its full sequence is Anti-neuroexcitation peptide 3 (85 aa).

Residues 1–21 form the signal peptide; it reads MKLSLLLVISASMLIDGLVNA. An LCN-type CS-alpha/beta domain is found at 22 to 82; sequence DGYIRGSNGC…TWKSESNTCG (61 aa). Intrachain disulfides connect C31/C81, C35/C56, C42/C63, and C46/C65.

It belongs to the long (4 C-C) scorpion toxin superfamily. Sodium channel inhibitor family. Beta subfamily. In terms of tissue distribution, expressed by the venom gland.

It localises to the secreted. In terms of biological role, binds to sodium channels (Nav) and inhibits them. Recombinant ANEP delays the convulsion seizure of model animals by 18% and shows anti-neuroexcitatory activity. The sequence is that of Anti-neuroexcitation peptide 3 from Olivierus martensii (Manchurian scorpion).